A 252-amino-acid polypeptide reads, in one-letter code: Glycerol-3-phosphate acyltransferase (252 aa).

Helical transmembrane passes span S6–G26, I66–I86, A104–F124, I140–I160, M164–I184, and V204–Y224.

Belongs to the PlsY family. As to quaternary structure, probably interacts with PlsX.

The protein resides in the cell membrane. The catalysed reaction is an acyl phosphate + sn-glycerol 3-phosphate = a 1-acyl-sn-glycero-3-phosphate + phosphate. The protein operates within lipid metabolism; phospholipid metabolism. Catalyzes the transfer of an acyl group from acyl-phosphate (acyl-PO(4)) to glycerol-3-phosphate (G3P) to form lysophosphatidic acid (LPA). This enzyme utilizes acyl-phosphate as fatty acyl donor, but not acyl-CoA or acyl-ACP. The polypeptide is Glycerol-3-phosphate acyltransferase (Ureaplasma urealyticum serovar 10 (strain ATCC 33699 / Western)).